The chain runs to 382 residues: uncharacterized protein (382 aa).

Transmembrane regions (helical) follow at residues G14–A34, V45–I65, F79–A99, F102–S122, L131–S151, L157–F177, L204–P224, A235–I255, V270–P290, A291–C311, A325–M345, and F348–L368.

This sequence belongs to the major facilitator superfamily. YcaD (TC 2.A.1.26) family.

The protein resides in the cell inner membrane. This is an uncharacterized protein from Escherichia coli O6:K15:H31 (strain 536 / UPEC).